Here is a 442-residue protein sequence, read N- to C-terminus: Cyclic adenylate deaminase (442 aa).

The protein belongs to the metallo-dependent hydrolases superfamily. Adenosine and AMP deaminases family. Zn(2+) is required as a cofactor.

The catalysed reaction is 3',5'-cyclic AMP + H2O + H(+) = 3',5'-cyclic IMP + NH4(+). Deaminates cAMP into cIMP, thereby repressing cAMP dependent metabolism or genes. The protein is Cyclic adenylate deaminase (add) of Leptospira interrogans serogroup Icterohaemorrhagiae serovar copenhageni (strain Fiocruz L1-130).